A 679-amino-acid polypeptide reads, in one-letter code: Recombination repair protein 1 (679 aa).

Residues 1–407 (MPRVKAVKKQ…TKKAKKAETK (407 aa)) form a disordered region. A compositionally biased stretch (basic residues) spans 45-55 (AKGKPRARKAT). A compositionally biased stretch (basic and acidic residues) spans 106-116 (ATAEAEPEPKV). Phosphothreonine is present on residues Thr-133 and Thr-140. Phosphoserine is present on Ser-142. 2 stretches are compositionally biased toward basic and acidic residues: residues 179–189 (EPPKQRARKEA) and 203–214 (SKEKVQKAETAA). The residue at position 258 (Ser-258) is a Phosphoserine. The span at 312–347 (KKEGKEPAPGKKQKKSADKENGVVEEEAKPSTETKP) shows a compositional bias: basic and acidic residues. An AP endonuclease region spans residues 428 to 679 (KICSWNVAGL…HCPITIFFNI (252 aa)). Glu-461 contributes to the Mg(2+) binding site. Residue Tyr-533 is part of the active site. The Mg(2+) site is built by Asp-572, Asn-574, and Asp-669. Catalysis depends on Asp-572, which acts as the Proton donor/acceptor.

The protein belongs to the DNA repair enzymes AP/ExoA family. As to quaternary structure, interacts with the zeta DNA polymerase complex; interacts (via the N-terminus) with the accessory subunit PolZ2/Rev7 and also interacts with the catalytic component PolZ1, however the interaction with PolZ1 is likely via PolZ2. Mg(2+) serves as cofactor. It depends on Mn(2+) as a cofactor.

It localises to the nucleus. The catalysed reaction is Exonucleolytic cleavage in the 3'- to 5'-direction to yield nucleoside 5'-phosphates.. In terms of biological role, plays a role in the cellular response to oxidative stress by promoting DNA repair mechanisms such as base excision repair and possibly homologous recombination repair. Functions as an apurinic/apyrimidinic (AP) endodeoxyribonuclease in the DNA base excision repair (BER) pathway of DNA lesions induced by oxidative and alkylating agents. Likely to initiate repair of AP sites in DNA by catalyzing hydrolytic incision of the phosphodiester backbone immediately adjacent to the damage, generating a single-strand break with 5'-deoxyribose phosphate and 3'-hydroxyl ends. Has a 3'-5' exoribonuclease activity on mismatched deoxyribonucleotides at the 3' termini of nicked or gapped DNA molecules during short-patch BER. Has apurinic endonuclease and double-stranded DNA 3'-exonuclease activities and carries out single-stranded DNA renaturation in a Mg(2+)-dependent manner. Activity is more efficient in purine-rich regions of dsDNA than in pyrimidine-rich regions. The protein is Recombination repair protein 1 of Drosophila melanogaster (Fruit fly).